Reading from the N-terminus, the 406-residue chain is Cysteine--tRNA ligase (406 aa).

Cys16 lines the Zn(2+) pocket. Positions 18 to 28 (PTVYSDVHIGN) match the 'HIGH' region motif. The Zn(2+) site is built by Cys192, His218, and Glu222. The 'KMSKS' region motif lies at 250 to 254 (KMAKS). Position 253 (Lys253) interacts with ATP.

Belongs to the class-I aminoacyl-tRNA synthetase family. As to quaternary structure, monomer. Requires Zn(2+) as cofactor.

The protein resides in the cytoplasm. The enzyme catalyses tRNA(Cys) + L-cysteine + ATP = L-cysteinyl-tRNA(Cys) + AMP + diphosphate. This chain is Cysteine--tRNA ligase, found in Mesomycoplasma hyopneumoniae (strain J / ATCC 25934 / NCTC 10110) (Mycoplasma hyopneumoniae).